The following is a 278-amino-acid chain: Orotidine 5'-phosphate decarboxylase (278 aa).

K96 functions as the Proton donor in the catalytic mechanism.

This sequence belongs to the OMP decarboxylase family. Type 2 subfamily.

The catalysed reaction is orotidine 5'-phosphate + H(+) = UMP + CO2. It participates in pyrimidine metabolism; UMP biosynthesis via de novo pathway; UMP from orotate: step 2/2. The polypeptide is Orotidine 5'-phosphate decarboxylase (Salinispora tropica (strain ATCC BAA-916 / DSM 44818 / JCM 13857 / NBRC 105044 / CNB-440)).